A 329-amino-acid chain; its full sequence is Ketol-acid reductoisomerase (NADP(+)) (329 aa).

The region spanning 2–182 is the KARI N-terminal Rossmann domain; sequence TQLFYDTDAD…GGTRAGILET (181 aa). Residues 25-28, Ser51, Ser53, and 83-86 each bind NADP(+); these read YGSQ and DEFQ. Residue His108 is part of the active site. Gly134 is an NADP(+) binding site. Residues 183-328 form the KARI C-terminal knotted domain; the sequence is NFKEETETDL…KGLRAMFSWL (146 aa). Residues Asp191, Glu195, Glu227, and Glu231 each contribute to the Mg(2+) site. Ser252 is a substrate binding site.

This sequence belongs to the ketol-acid reductoisomerase family. The cofactor is Mg(2+).

The catalysed reaction is (2R)-2,3-dihydroxy-3-methylbutanoate + NADP(+) = (2S)-2-acetolactate + NADPH + H(+). It carries out the reaction (2R,3R)-2,3-dihydroxy-3-methylpentanoate + NADP(+) = (S)-2-ethyl-2-hydroxy-3-oxobutanoate + NADPH + H(+). It functions in the pathway amino-acid biosynthesis; L-isoleucine biosynthesis; L-isoleucine from 2-oxobutanoate: step 2/4. The protein operates within amino-acid biosynthesis; L-valine biosynthesis; L-valine from pyruvate: step 2/4. In terms of biological role, involved in the biosynthesis of branched-chain amino acids (BCAA). Catalyzes an alkyl-migration followed by a ketol-acid reduction of (S)-2-acetolactate (S2AL) to yield (R)-2,3-dihydroxy-isovalerate. In the isomerase reaction, S2AL is rearranged via a Mg-dependent methyl migration to produce 3-hydroxy-3-methyl-2-ketobutyrate (HMKB). In the reductase reaction, this 2-ketoacid undergoes a metal-dependent reduction by NADPH to yield (R)-2,3-dihydroxy-isovalerate. This chain is Ketol-acid reductoisomerase (NADP(+)), found in Prochlorococcus marinus (strain MIT 9515).